Here is a 412-residue protein sequence, read N- to C-terminus: uncharacterized protein (412 aa).

Residues 50–264 (EVDIRTAYIN…KSGRRIVIGD (215 aa)) form the Radical SAM core domain. Residues cysteine 64, cysteine 68, and cysteine 71 each coordinate [4Fe-4S] cluster.

Belongs to the radical SAM superfamily. Anaerobic sulfatase-maturating enzyme family. [4Fe-4S] cluster is required as a cofactor.

This is an uncharacterized protein from Archaeoglobus fulgidus (strain ATCC 49558 / DSM 4304 / JCM 9628 / NBRC 100126 / VC-16).